The primary structure comprises 215 residues: N-(5'-phosphoribosyl)anthranilate isomerase (215 aa).

This sequence belongs to the TrpF family.

It catalyses the reaction N-(5-phospho-beta-D-ribosyl)anthranilate = 1-(2-carboxyphenylamino)-1-deoxy-D-ribulose 5-phosphate. Its pathway is amino-acid biosynthesis; L-tryptophan biosynthesis; L-tryptophan from chorismate: step 3/5. In Sinorhizobium medicae (strain WSM419) (Ensifer medicae), this protein is N-(5'-phosphoribosyl)anthranilate isomerase.